Consider the following 228-residue polypeptide: ATP synthase F(0) complex subunit a (228 aa).

6 helical membrane-spanning segments follow: residues 13–33 (YFLG…TMFI), 70–90 (WALL…TGLL), 100–120 (LSLN…MGAT), 140–160 (APFL…ALGV), 162–182 (LTAN…ALIN), and 190–210 (LFLT…VSFI).

The protein belongs to the ATPase A chain family. As to quaternary structure, component of the ATP synthase complex composed at least of ATP5F1A/subunit alpha, ATP5F1B/subunit beta, ATP5MC1/subunit c (homooctomer), MT-ATP6/subunit a, MT-ATP8/subunit 8, ATP5ME/subunit e, ATP5MF/subunit f, ATP5MG/subunit g, ATP5MK/subunit k, ATP5MJ/subunit j, ATP5F1C/subunit gamma, ATP5F1D/subunit delta, ATP5F1E/subunit epsilon, ATP5PF/subunit F6, ATP5PB/subunit b, ATP5PD/subunit d, ATP5PO/subunit OSCP. ATP synthase complex consists of a soluble F(1) head domain (subunits alpha(3) and beta(3)) - the catalytic core - and a membrane F(0) domain - the membrane proton channel (subunits c, a, 8, e, f, g, k and j). These two domains are linked by a central stalk (subunits gamma, delta, and epsilon) rotating inside the F1 region and a stationary peripheral stalk (subunits F6, b, d, and OSCP). Interacts with DNAJC30; interaction is direct.

The protein resides in the mitochondrion inner membrane. It carries out the reaction H(+)(in) = H(+)(out). Functionally, subunit a, of the mitochondrial membrane ATP synthase complex (F(1)F(0) ATP synthase or Complex V) that produces ATP from ADP in the presence of a proton gradient across the membrane which is generated by electron transport complexes of the respiratory chain. ATP synthase complex consist of a soluble F(1) head domain - the catalytic core - and a membrane F(1) domain - the membrane proton channel. These two domains are linked by a central stalk rotating inside the F(1) region and a stationary peripheral stalk. During catalysis, ATP synthesis in the catalytic domain of F(1) is coupled via a rotary mechanism of the central stalk subunits to proton translocation. With the subunit c (ATP5MC1), forms the proton-conducting channel in the F(0) domain, that contains two crucial half-channels (inlet and outlet) that facilitate proton movement from the mitochondrial intermembrane space (IMS) into the matrix. Protons are taken up via the inlet half-channel and released through the outlet half-channel, following a Grotthuss mechanism. The chain is ATP synthase F(0) complex subunit a from Myxine glutinosa (Atlantic hagfish).